A 536-amino-acid chain; its full sequence is Lysosomal acid glucosylceramidase (536 aa).

An N-terminal signal peptide occupies residues Met1–Gly39. 2 disulfides stabilise this stretch: Cys43-Cys55 and Cys57-Cys62. N-linked (GlcNAc...) asparagine glycosylation is found at Asn58, Asn98, and Asn185. Glu274 acts as the Proton donor in catalysis. The N-linked (GlcNAc...) asparagine glycan is linked to Asn309. The Nucleophile role is filled by Glu379. Asn501 carries N-linked (GlcNAc...) asparagine glycosylation.

It belongs to the glycosyl hydrolase 30 family. As to quaternary structure, interacts with saposin-C. Interacts with SCARB2. Interacts with TCP1. Interacts with GRN; this interaction prevents aggregation of GBA1-SCARB2 complex via interaction with HSPA1A upon stress.

Its subcellular location is the lysosome membrane. The catalysed reaction is a beta-D-glucosyl-(1&lt;-&gt;1')-N-acylsphing-4-enine + H2O = an N-acylsphing-4-enine + D-glucose. It carries out the reaction a beta-D-galactosyl-(1&lt;-&gt;1')-N-acylsphing-4-enine + H2O = an N-acylsphing-4-enine + D-galactose. The enzyme catalyses cholesteryl 3-beta-D-glucoside + H2O = cholesterol + D-glucose. It catalyses the reaction a beta-D-glucosyl-(1&lt;-&gt;1')-N-acylsphing-4-enine + cholesterol = cholesteryl 3-beta-D-glucoside + an N-acylsphing-4-enine. The catalysed reaction is beta-D-glucosyl-N-(9Z-octadecenoyl)-sphing-4E-enine + cholesterol = N-(9Z-octadecenoyl)-sphing-4-enine + cholesteryl 3-beta-D-glucoside. It carries out the reaction beta-D-glucosyl-N-octanoylsphing-4E-enine + cholesterol = N-octanoylsphing-4-enine + cholesteryl 3-beta-D-glucoside. The enzyme catalyses beta-D-glucosyl-N-dodecanoylsphing-4-enine + cholesterol = N-dodecanoylsphing-4-enine + cholesteryl 3-beta-D-glucoside. It catalyses the reaction beta-D-glucosyl-(1&lt;-&gt;1)-N-octadecanoylsphing-4-enine + cholesterol = N-octadecanoylsphing-4-enine + cholesteryl 3-beta-D-glucoside. The catalysed reaction is beta-D-glucosyl-(1&lt;-&gt;1')-N-(15Z-tetracosenoyl)-sphing-4-enine + cholesterol = N-(15Z-tetracosenoyl)-sphing-4-enine + cholesteryl 3-beta-D-glucoside. It carries out the reaction a beta-D-galactosyl-(1&lt;-&gt;1')-N-acylsphing-4-enine + cholesterol = cholesteryl 3-beta-D-galactoside + an N-acylsphing-4-enine. The enzyme catalyses 1-(beta-D-galactosyl)-N-dodecanoylsphing-4-enine + cholesterol = cholesteryl 3-beta-D-galactoside + N-dodecanoylsphing-4-enine. It catalyses the reaction a beta-D-xylosyl-(1&lt;-&gt;1')-N-acylsphing-4-enine + cholesterol = cholesteryl 3-beta-D-xyloside + an N-acylsphing-4-enine. The catalysed reaction is beta-D-xylosyl-(1&lt;-&gt;1')-N-(9Z-octadecenoyl)-sphing-4-enine + cholesterol = cholesteryl 3-beta-D-xyloside + N-(9Z-octadecenoyl)-sphing-4-enine. It participates in steroid metabolism; cholesterol metabolism. The protein operates within sphingolipid metabolism. Its function is as follows. Glucosylceramidase that catalyzes, within the lysosomal compartment, the hydrolysis of glucosylceramides/GlcCers (such as beta-D-glucosyl-(1&lt;-&gt;1')-N-acylsphing-4-enine) into free ceramides (such as N-acylsphing-4-enine) and glucose. Plays a central role in the degradation of complex lipids and the turnover of cellular membranes. Through the production of ceramides, participates in the PKC-activated salvage pathway of ceramide formation. Catalyzes the glucosylation of cholesterol, through a transglucosylation reaction where glucose is transferred from GlcCer to cholesterol. GlcCer containing mono-unsaturated fatty acids (such as beta-D-glucosyl-N-(9Z-octadecenoyl)-sphing-4-enine) are preferred as glucose donors for cholesterol glucosylation when compared with GlcCer containing same chain length of saturated fatty acids (such as beta-D-glucosyl-N-octadecanoyl-sphing-4-enine). Under specific conditions, may alternatively catalyze the reverse reaction, transferring glucose from cholesteryl 3-beta-D-glucoside to ceramide. Can also hydrolyze cholesteryl 3-beta-D-glucoside producing glucose and cholesterol. Catalyzes the hydrolysis of galactosylceramides/GalCers (such as beta-D-galactosyl-(1&lt;-&gt;1')-N-acylsphing-4-enine), as well as the transfer of galactose between GalCers and cholesterol in vitro, but with lower activity than with GlcCers. Contrary to GlcCer and GalCer, xylosylceramide/XylCer (such as beta-D-xyosyl-(1&lt;-&gt;1')-N-acylsphing-4-enine) is not a good substrate for hydrolysis, however it is a good xylose donor for transxylosylation activity to form cholesteryl 3-beta-D-xyloside. This is Lysosomal acid glucosylceramidase (GBA1) from Pongo abelii (Sumatran orangutan).